A 322-amino-acid polypeptide reads, in one-letter code: MSQKKKASHPAINLMAGGTAGLFEALCCHPLDTIKVRMQIYRRVAGIEHVKPPGFIKTGRTIYQKEGFLALYKGLGAVVIGIIPKMAIRFSSYEFYRTLLVNKESGIVSTGNTFVAGVGAGITEAVLVVNPMEVVKIRLQAQHLTPSEPNAGPKYNNAIHAAYTIVKEEGVSALYRGVSLTAARQATNQGANFTVYSKLKEFLQNYHQMDVLPSWETSCIGLISGAIGPFSNAPLDTIKTRLQKDKSISLEKQSGMKKIITIGAQLLKEEGFRALYKGITPRVMRVAPGQAVTFTVYEYVREHLENLGIFKKNDTPKPKPLK.

Solcar repeat units lie at residues Ser8–Leu99, Gly111–Phe202, and Leu212–His303. Helical transmembrane passes span Ala11 to Leu31, Phe68 to Ile88, Phe114 to Val134, Gly177 to Phe193, Cys219 to Leu235, and Gly278 to Thr295.

Belongs to the mitochondrial carrier (TC 2.A.29) family.

The protein localises to the mitochondrion inner membrane. Transports cytoplasmic succinate, derived from isocitrate by the action of isocitrate lyase in the cytosol, into the mitochondrial matrix in exchange for fumarate. The polypeptide is Succinate/fumarate mitochondrial transporter (SFC1) (Saccharomyces cerevisiae (strain ATCC 204508 / S288c) (Baker's yeast)).